The primary structure comprises 105 residues: Cell division protein FtsL (105 aa).

Topologically, residues 1-24 are cytoplasmic; sequence MAEKMEKTGQILQMQLKRFSRVEK. The helical transmembrane segment at 25 to 45 threads the bilayer; that stretch reads AFYFSIAVTTLIVAISIIFMQ. Over 46-105 the chain is Extracellular; that stretch reads TKLLQVQNDLTKINAQIEEKKTELDDAKQEVNELLRAERLKEIANSHDLQLNNENIRIAE.

The protein belongs to the FtsL family.

It localises to the cell membrane. Functionally, essential cell division protein. In Streptococcus pneumoniae (strain ATCC BAA-255 / R6), this protein is Cell division protein FtsL.